The primary structure comprises 190 residues: Shikimate kinase (190 aa).

22–27 (GSGKST) lines the ATP pocket. Ser-26 serves as a coordination point for Mg(2+). 3 residues coordinate substrate: Asp-44, Arg-68, and Gly-90. Arg-127 contributes to the ATP binding site. Arg-146 contributes to the substrate binding site.

It belongs to the shikimate kinase family. As to quaternary structure, monomer. The cofactor is Mg(2+).

Its subcellular location is the cytoplasm. The catalysed reaction is shikimate + ATP = 3-phosphoshikimate + ADP + H(+). The protein operates within metabolic intermediate biosynthesis; chorismate biosynthesis; chorismate from D-erythrose 4-phosphate and phosphoenolpyruvate: step 5/7. Its function is as follows. Catalyzes the specific phosphorylation of the 3-hydroxyl group of shikimic acid using ATP as a cosubstrate. The protein is Shikimate kinase of Microcystis aeruginosa (strain NIES-843 / IAM M-2473).